The primary structure comprises 164 residues: Arginine repressor (164 aa).

This sequence belongs to the ArgR family.

Its subcellular location is the cytoplasm. It functions in the pathway amino-acid biosynthesis; L-arginine biosynthesis [regulation]. Functionally, regulates arginine biosynthesis genes. The chain is Arginine repressor from Thermus thermophilus (strain ATCC BAA-163 / DSM 7039 / HB27).